A 305-amino-acid chain; its full sequence is Olfactory receptor 4B13 (305 aa).

At 1–25 (MANKNNVTELIFTGLFQDPEVQKVC) the chain is on the extracellular side. The N-linked (GlcNAc...) asparagine glycan is linked to Asn-6. Residues 26-46 (FVLFLPVYLATLLGNSLILVA) traverse the membrane as a helical segment. The Cytoplasmic portion of the chain corresponds to 47 to 55 (VSISKTLHS). A helical transmembrane segment spans residues 56–76 (PMYFFLSSLSLVEICYSSTIV). Residues 77-95 (PKFITDLLAKVKTISLKGC) are Extracellular-facing. A disulfide bridge links Cys-95 with Cys-187. The helical transmembrane segment at 96–116 (LTQIFFSHFFGVVEVILLVVM) threads the bilayer. At 117 to 141 (AYDRYVAICKPLHYMNIMSRQVCHM) the chain is on the cytoplasmic side. Residues 142 to 162 (LVAGSWLGGFIHSIIQIIITI) form a helical membrane-spanning segment. Topologically, residues 163 to 202 (PLPFCGPNVIDHYFCDLQQLFKLACTDTFMEGFIVMANSG) are extracellular. The chain crosses the membrane as a helical span at residues 203–223 (LISIVSLFILVSSYAVILISL). Topologically, residues 224-236 (RKRSAEGRRKALS) are cytoplasmic. Residues 237–257 (TCASHITVVILFFVPGAFIYM) form a helical membrane-spanning segment. Over 258 to 266 (RPSSTFTED) the chain is Extracellular. A helical transmembrane segment spans residues 267–287 (KLVSVFYTVITPMLNPIVYTL). Topologically, residues 288–305 (RNTEMKNAIRMSWKQKDS) are cytoplasmic.

The protein belongs to the G-protein coupled receptor 1 family.

It is found in the cell membrane. Functionally, odorant receptor. The protein is Olfactory receptor 4B13 of Mus musculus (Mouse).